The sequence spans 262 residues: Phosphonates import ATP-binding protein PhnC (262 aa).

The ABC transporter domain occupies 5–253 (IRVEKLAKTF…RFDHLYRSIN (249 aa)). 37–44 (GPSGSGKS) is a binding site for ATP.

This sequence belongs to the ABC transporter superfamily. Phosphonates importer (TC 3.A.1.9.1) family. In terms of assembly, the complex is composed of two ATP-binding proteins (PhnC), two transmembrane proteins (PhnE) and a solute-binding protein (PhnD).

It localises to the cell inner membrane. It catalyses the reaction phosphonate(out) + ATP + H2O = phosphonate(in) + ADP + phosphate + H(+). In terms of biological role, part of the ABC transporter complex PhnCDE involved in phosphonates import. Responsible for energy coupling to the transport system. This is Phosphonates import ATP-binding protein PhnC from Escherichia coli (strain UTI89 / UPEC).